A 325-amino-acid polypeptide reads, in one-letter code: Glutaminase (325 aa).

Substrate is bound by residues Ser76, Asn125, Glu169, Asn176, Tyr200, Tyr252, and Val270.

It belongs to the glutaminase family. In terms of assembly, homotetramer.

It carries out the reaction L-glutamine + H2O = L-glutamate + NH4(+). This chain is Glutaminase, found in Clavibacter michiganensis subsp. michiganensis (strain NCPPB 382).